The chain runs to 361 residues: MFYWLTELAGTIPGINVFRYITFRTGGAMVTGALFVFLFGPWIIDHLRLAQGKGQPIRADGPPTHLMTKKGTPTMGGLMILSGLVVSTLLWANLHNPYVWVVLMVTLGFGFVGFYDDYLKVTKQTHAGFSGRLRLAVEGLIALFACLVIIWAGRDSSVMHLGIPFAKDFAINLGWFYLVFGAFIIVGAGNAVNLTDGLDGLAIVPVMIAAASFGMIAYLVGNAVFSEYLQIRYVAGTGELAVLCGAVLGAGLGFLWFNAPPASIFMGDTGSLALGGMIGSIAVAVKHEIVLAVIGGLFVFEALSVIVQVASFKLTGKRIFRMAPIHHHYEQKGWTEPQIVIRFWIIAVMLALAGLSTLKLR.

Helical transmembrane passes span Gly27–Leu47, Thr72–Ala92, Leu94–Phe114, Leu133–Gly153, Phe169–Gly189, Gly200–Val220, Leu240–Pro260, Ile264–Ala284, Ile289–Val309, and Gln338–Leu358.

This sequence belongs to the glycosyltransferase 4 family. MraY subfamily. Requires Mg(2+) as cofactor.

The protein resides in the cell inner membrane. It carries out the reaction UDP-N-acetyl-alpha-D-muramoyl-L-alanyl-gamma-D-glutamyl-meso-2,6-diaminopimeloyl-D-alanyl-D-alanine + di-trans,octa-cis-undecaprenyl phosphate = di-trans,octa-cis-undecaprenyl diphospho-N-acetyl-alpha-D-muramoyl-L-alanyl-D-glutamyl-meso-2,6-diaminopimeloyl-D-alanyl-D-alanine + UMP. It participates in cell wall biogenesis; peptidoglycan biosynthesis. In terms of biological role, catalyzes the initial step of the lipid cycle reactions in the biosynthesis of the cell wall peptidoglycan: transfers peptidoglycan precursor phospho-MurNAc-pentapeptide from UDP-MurNAc-pentapeptide onto the lipid carrier undecaprenyl phosphate, yielding undecaprenyl-pyrophosphoryl-MurNAc-pentapeptide, known as lipid I. In Afipia carboxidovorans (strain ATCC 49405 / DSM 1227 / KCTC 32145 / OM5) (Oligotropha carboxidovorans), this protein is Phospho-N-acetylmuramoyl-pentapeptide-transferase.